A 518-amino-acid chain; its full sequence is Metal transporter Nramp1 (518 aa).

12 helical membrane-spanning segments follow: residues 35–55, 68–88, 107–127, 131–151, 172–192, 218–238, 255–275, 315–337, 357–377, 382–402, 418–438, and 458–478; these read FLSHIGPGFMVCLAYLDPGNM, ELLWVILIGLIFALIIQSLSA, PVWVKTCLWLLAELAVIASDI, IGTGFAFNLLFHIPVWTGVLI, VVVALLVFVMAGCFFVEMSIV, IALLGALVMPHNLFLHSALVL, FFLFESGIALFVALLVNIAII, SATVYGVALLASGQSSTITGTYA, LMTRSIAIVPSLIVSIIGGSS, LIVIASMILSFELPFALIPLL, IYIVGFSWVLGFVIIGINIYF, and VLIGIVLFPLMLLYVVAVIYL.

This sequence belongs to the NRAMP (TC 2.A.55) family.

Its subcellular location is the membrane. Probable metal transporter that may participate in the control of iron homeostasis. The sequence is that of Metal transporter Nramp1 (NRAMP1) from Oryza sativa subsp. japonica (Rice).